Reading from the N-terminus, the 475-residue chain is Trigger factor (475 aa).

The 86-residue stretch at 165 to 250 (GDRVTIDYLG…VKAVFRPDEL (86 aa)) folds into the PPIase FKBP-type domain. The segment covering 439-466 (EYDETDVPEEKPAKKKSAVKEKSAEKTS) has biased composition (basic and acidic residues). The tract at residues 439–475 (EYDETDVPEEKPAKKKSAVKEKSAEKTSAKKKAPKKA) is disordered.

It belongs to the FKBP-type PPIase family. Tig subfamily.

It is found in the cytoplasm. It carries out the reaction [protein]-peptidylproline (omega=180) = [protein]-peptidylproline (omega=0). Functionally, involved in protein export. Acts as a chaperone by maintaining the newly synthesized protein in an open conformation. Functions as a peptidyl-prolyl cis-trans isomerase. The protein is Trigger factor of Bartonella tribocorum (strain CIP 105476 / IBS 506).